Reading from the N-terminus, the 388-residue chain is Succinate--CoA ligase [ADP-forming] subunit beta (388 aa).

In terms of domain architecture, ATP-grasp spans 9 to 244 (KQLFAEYGLP…PSQDDPREAH (236 aa)). ATP contacts are provided by residues K46, 53-55 (GRG), E99, T102, and E107. N199 and D213 together coordinate Mg(2+). Residues N264 and 321-323 (GIV) contribute to the substrate site.

The protein belongs to the succinate/malate CoA ligase beta subunit family. In terms of assembly, heterotetramer of two alpha and two beta subunits. Mg(2+) is required as a cofactor.

It carries out the reaction succinate + ATP + CoA = succinyl-CoA + ADP + phosphate. The catalysed reaction is GTP + succinate + CoA = succinyl-CoA + GDP + phosphate. The protein operates within carbohydrate metabolism; tricarboxylic acid cycle; succinate from succinyl-CoA (ligase route): step 1/1. Succinyl-CoA synthetase functions in the citric acid cycle (TCA), coupling the hydrolysis of succinyl-CoA to the synthesis of either ATP or GTP and thus represents the only step of substrate-level phosphorylation in the TCA. The beta subunit provides nucleotide specificity of the enzyme and binds the substrate succinate, while the binding sites for coenzyme A and phosphate are found in the alpha subunit. The polypeptide is Succinate--CoA ligase [ADP-forming] subunit beta (Pseudomonas syringae pv. tomato (strain ATCC BAA-871 / DC3000)).